A 160-amino-acid chain; its full sequence is General odorant-binding protein 2 (160 aa).

Positions 1–20 (MFSFLILVFVASVADSVIGT) are cleaved as a signal peptide. 3 disulfides stabilise this stretch: C38/C73, C69/C127, and C116/C136.

This sequence belongs to the PBP/GOBP family. Homodimer. Detected in antenna (at protein level). Expressed at high levels in antenna.

Functionally, present in the aqueous fluid surrounding olfactory sensory dendrites and are thought to aid in the capture and transport of hydrophobic odorants into and through this fluid. The protein is General odorant-binding protein 2 of Bombyx mori (Silk moth).